The sequence spans 366 residues: Histidinol-phosphate aminotransferase 2 (366 aa).

Residue Lys226 is modified to N6-(pyridoxal phosphate)lysine.

This sequence belongs to the class-II pyridoxal-phosphate-dependent aminotransferase family. Histidinol-phosphate aminotransferase subfamily. Homodimer. It depends on pyridoxal 5'-phosphate as a cofactor.

It catalyses the reaction L-histidinol phosphate + 2-oxoglutarate = 3-(imidazol-4-yl)-2-oxopropyl phosphate + L-glutamate. It functions in the pathway amino-acid biosynthesis; L-histidine biosynthesis; L-histidine from 5-phospho-alpha-D-ribose 1-diphosphate: step 7/9. The polypeptide is Histidinol-phosphate aminotransferase 2 (Haemophilus influenzae (strain 86-028NP)).